The chain runs to 223 residues: Urease accessory protein UreF (223 aa).

It belongs to the UreF family. In terms of assembly, ureD, UreF and UreG form a complex that acts as a GTP-hydrolysis-dependent molecular chaperone, activating the urease apoprotein by helping to assemble the nickel containing metallocenter of UreC. The UreE protein probably delivers the nickel.

It localises to the cytoplasm. In terms of biological role, required for maturation of urease via the functional incorporation of the urease nickel metallocenter. In Pseudomonas paraeruginosa (strain DSM 24068 / PA7) (Pseudomonas aeruginosa (strain PA7)), this protein is Urease accessory protein UreF.